The sequence spans 397 residues: Chorismate synthase (397 aa).

NADP(+)-binding residues include R40 and R46. Residues 129–131, 257–258, G302, 317–321, and R343 each bind FMN; these read RAS, QA, and KPIAT.

This sequence belongs to the chorismate synthase family. In terms of assembly, homotetramer. Requires FMNH2 as cofactor.

It catalyses the reaction 5-O-(1-carboxyvinyl)-3-phosphoshikimate = chorismate + phosphate. It participates in metabolic intermediate biosynthesis; chorismate biosynthesis; chorismate from D-erythrose 4-phosphate and phosphoenolpyruvate: step 7/7. Catalyzes the anti-1,4-elimination of the C-3 phosphate and the C-6 proR hydrogen from 5-enolpyruvylshikimate-3-phosphate (EPSP) to yield chorismate, which is the branch point compound that serves as the starting substrate for the three terminal pathways of aromatic amino acid biosynthesis. This reaction introduces a second double bond into the aromatic ring system. This is Chorismate synthase from Prosthecochloris aestuarii (strain DSM 271 / SK 413).